The primary structure comprises 379 residues: MLKPPLPLRSLLFLQLPLLGVGLNPKFLTPSGNEDIGGKPGTGGDFFLTSTPAGTLDVSTLPLPKVQCFVFNVEYMNCTWNSSSEPQPNNLTLHYGYRNFNGDDKLQECGHYLFSEGITSGCWFGKKEIRLYETFVVQLQDPREHRKQPKQMLKLQDLVIPWAPENLTLRNLSEFQLELSWSNRYLDHCLEHLVQYRSDRDRSWTEQSVDHRHSFSLPSVDAQKLYTFRVRSRYNPLCGSAQHWSDWSYPIHWGSNTSKENIENPENPSLFALEAVLIPLGSMGLIVSLICVYCWLERTMPRIPTLKNLEDLVTEYQGNFSAWSGVSKGLAESLQPDYSERLCHVSEIPPKGGEGPGGSPCSQHSPYWAPPCYTLKPEP.

A signal peptide spans 1 to 22 (MLKPPLPLRSLLFLQLPLLGVG). Over 23 to 269 (LNPKFLTPSG…ENIENPENPS (247 aa)) the chain is Extracellular. Cys68 and Cys78 are disulfide-bonded. Residues Asn77, Asn81, and Asn90 are each glycosylated (N-linked (GlcNAc...) asparagine). Residues Cys109 and Cys122 are joined by a disulfide bond. The Fibronectin type-III domain occupies 163–260 (APENLTLRNL…IHWGSNTSKE (98 aa)). Residues Asn166 and Asn171 are each glycosylated (N-linked (GlcNAc...) asparagine). A WSXWS motif motif is present at residues 244-248 (WSDWS). Residues 270–290 (LFALEAVLIPLGSMGLIVSLI) traverse the membrane as a helical segment. Over 291–379 (CVYCWLERTM…PPCYTLKPEP (89 aa)) the chain is Cytoplasmic. A Box 1 motif motif is present at residues 299 to 307 (TMPRIPTLK). At Thr305 the chain carries Phosphothreonine. Residues 349–370 (PPKGGEGPGGSPCSQHSPYWAP) are disordered.

It belongs to the type I cytokine receptor family. Type 5 subfamily. In terms of assembly, the gamma subunit is common to the IL2, IL4, IL7, IL15, IL21 and probably also the IL13 receptors. Interacts with SHB upon interleukin stimulation.

It is found in the cell membrane. It localises to the cell surface. Its function is as follows. Common subunit for the receptors for a variety of interleukins. Probably in association with IL15RA, involved in the stimulation of neutrophil phagocytosis by IL15. The chain is Cytokine receptor common subunit gamma (IL2RG) from Bos taurus (Bovine).